Reading from the N-terminus, the 434-residue chain is N-lysine methyltransferase SMYD2-B (434 aa).

The region spanning 8-242 (PGIEQFASPG…PGQEIYTSYI (235 aa)) is the SET domain. Residue 18–20 (KGR) participates in S-adenosyl-L-methionine binding. 8 residues coordinate Zn(2+): C53, C56, C66, C69, C75, C79, H87, and C91. The MYND-type zinc finger occupies 53–91 (CEQCFTRKKGLAKCGKCKKAFYCNANCQKKNWPMHKLEC). S-adenosyl-L-methionine contacts are provided by residues H138, 207 to 208 (NH), and 259 to 261 (YYF).

This sequence belongs to the class V-like SAM-binding methyltransferase superfamily.

It localises to the cytoplasm. The protein localises to the cytosol. It is found in the nucleus. The catalysed reaction is L-lysyl(4)-[histone H3] + 3 S-adenosyl-L-methionine = N(6),N(6),N(6)-trimethyl-L-lysyl(4)-[histone H3] + 3 S-adenosyl-L-homocysteine + 3 H(+). It catalyses the reaction L-lysyl-[protein] + S-adenosyl-L-methionine = N(6)-methyl-L-lysyl-[protein] + S-adenosyl-L-homocysteine + H(+). Protein-lysine N-methyltransferase that methylates both histones and non-histone proteins, including p53/TP53 and RB1. Specifically trimethylates histone H3 'Lys-4' (H3K4me3) in vivo. The activity requires interaction with HSP90alpha. Shows even higher methyltransferase activity on p53/TP53. Monomethylates 'Lys-370' of p53/TP53, leading to decreased DNA-binding activity and subsequent transcriptional regulation activity of p53/TP53. Monomethylates RB1 at 'Lys-860'. The chain is N-lysine methyltransferase SMYD2-B (smyd2b) from Danio rerio (Zebrafish).